The following is a 51-amino-acid chain: Large ribosomal subunit protein eL39 (51 aa).

It belongs to the eukaryotic ribosomal protein eL39 family.

The protein is Large ribosomal subunit protein eL39 of Picrophilus torridus (strain ATCC 700027 / DSM 9790 / JCM 10055 / NBRC 100828 / KAW 2/3).